The sequence spans 156 residues: Small ribosomal subunit protein uS7 (156 aa).

Belongs to the universal ribosomal protein uS7 family. As to quaternary structure, part of the 30S ribosomal subunit. Contacts proteins S9 and S11.

One of the primary rRNA binding proteins, it binds directly to 16S rRNA where it nucleates assembly of the head domain of the 30S subunit. Is located at the subunit interface close to the decoding center, probably blocks exit of the E-site tRNA. This Streptococcus mutans serotype c (strain ATCC 700610 / UA159) protein is Small ribosomal subunit protein uS7.